We begin with the raw amino-acid sequence, 101 residues long: Urease subunit beta (101 aa).

It belongs to the urease beta subunit family. As to quaternary structure, heterotrimer of UreA (gamma), UreB (beta) and UreC (alpha) subunits. Three heterotrimers associate to form the active enzyme.

The protein resides in the cytoplasm. It carries out the reaction urea + 2 H2O + H(+) = hydrogencarbonate + 2 NH4(+). It functions in the pathway nitrogen metabolism; urea degradation; CO(2) and NH(3) from urea (urease route): step 1/1. This Sinorhizobium medicae (strain WSM419) (Ensifer medicae) protein is Urease subunit beta.